Reading from the N-terminus, the 173-residue chain is Translation initiation factor IF-3 (173 aa).

Belongs to the IF-3 family. As to quaternary structure, monomer.

The protein localises to the cytoplasm. IF-3 binds to the 30S ribosomal subunit and shifts the equilibrium between 70S ribosomes and their 50S and 30S subunits in favor of the free subunits, thus enhancing the availability of 30S subunits on which protein synthesis initiation begins. This is Translation initiation factor IF-3 from Methylobacterium sp. (strain 4-46).